The chain runs to 203 residues: Small ribosomal subunit protein uS4 (203 aa).

An S4 RNA-binding domain is found at 93 to 154 (RRLDNVVYRC…KSRNLDAVAD (62 aa)).

It belongs to the universal ribosomal protein uS4 family. Part of the 30S ribosomal subunit. Contacts protein S5. The interaction surface between S4 and S5 is involved in control of translational fidelity.

Functionally, one of the primary rRNA binding proteins, it binds directly to 16S rRNA where it nucleates assembly of the body of the 30S subunit. In terms of biological role, with S5 and S12 plays an important role in translational accuracy. The protein is Small ribosomal subunit protein uS4 of Chlorobaculum tepidum (strain ATCC 49652 / DSM 12025 / NBRC 103806 / TLS) (Chlorobium tepidum).